A 241-amino-acid chain; its full sequence is Small ribosomal subunit protein uS3 (241 aa).

Positions 39–107 (IREVLMKNLK…EVVINIVEVR (69 aa)) constitute a KH type-2 domain. The tract at residues 219 to 241 (MAELDHAGGGGGGERRRRERDAA) is disordered. Residues 231-241 (GERRRRERDAA) are compositionally biased toward basic and acidic residues.

This sequence belongs to the universal ribosomal protein uS3 family. In terms of assembly, part of the 30S ribosomal subunit. Forms a tight complex with proteins S10 and S14.

In terms of biological role, binds the lower part of the 30S subunit head. Binds mRNA in the 70S ribosome, positioning it for translation. The chain is Small ribosomal subunit protein uS3 from Beijerinckia indica subsp. indica (strain ATCC 9039 / DSM 1715 / NCIMB 8712).